We begin with the raw amino-acid sequence, 442 residues long: Transcription factor MYCFIDRAFT_198930 (442 aa).

The disordered stretch occupies residues 1 to 34 (MSTTPMAAPPGADLKPVTSSRGRSSTSDEQKLRS). A DNA-binding region (zn(2)-C6 fungal-type) is located at residues 36 to 63 (CESCAQSKLKCSGDKPACARCAKRGLAC). The tract at residues 74–107 (KPKGYTSTNDNNPSKRREDSHSPAASQWSSTGHL) is disordered. Positions 96 to 107 (PAASQWSSTGHL) are enriched in polar residues.

The protein resides in the nucleus. Transcription factor that positively regulates the expression of the gene cluster that mediates the biosynthesis of an emodin derivative that may be involved in black Sigatoka disease of banana. This chain is Transcription factor MYCFIDRAFT_198930, found in Pseudocercospora fijiensis (strain CIRAD86) (Black leaf streak disease fungus).